We begin with the raw amino-acid sequence, 318 residues long: Transaldolase (318 aa).

K131 serves as the catalytic Schiff-base intermediate with substrate.

This sequence belongs to the transaldolase family. Type 1 subfamily. Homodimer.

The protein resides in the cytoplasm. The enzyme catalyses D-sedoheptulose 7-phosphate + D-glyceraldehyde 3-phosphate = D-erythrose 4-phosphate + beta-D-fructose 6-phosphate. It participates in carbohydrate degradation; pentose phosphate pathway; D-glyceraldehyde 3-phosphate and beta-D-fructose 6-phosphate from D-ribose 5-phosphate and D-xylulose 5-phosphate (non-oxidative stage): step 2/3. Its function is as follows. Transaldolase is important for the balance of metabolites in the pentose-phosphate pathway. The protein is Transaldolase of Buchnera aphidicola subsp. Cinara cedri (strain Cc).